The primary structure comprises 332 residues: L-lactate dehydrogenase A chain (332 aa).

Residue Ala-2 is modified to N-acetylalanine. An N6-acetyllysine; alternate modification is found at Lys-5. Lys-5 is modified (N6-succinyllysine; alternate). Position 10 is a phosphotyrosine (Tyr-10). Lys-14 is modified (N6-acetyllysine). The residue at position 18 (Thr-18) is a Phosphothreonine. Residue Gly-29–Lys-57 participates in NAD(+) binding. Lys-57 bears the N6-acetyllysine; alternate mark. Residue Lys-57 forms a Glycyl lysine isopeptide (Lys-Gly) (interchain with G-Cter in SUMO2); alternate linkage. Position 81 is an N6-acetyllysine (Lys-81). Residue Arg-99 participates in NAD(+) binding. Residue Arg-106 coordinates substrate. Lys-118 carries the post-translational modification N6-acetyllysine; alternate. Lys-118 carries the N6-succinyllysine; alternate modification. Lys-126 bears the N6-acetyllysine mark. Asn-138 lines the NAD(+) pocket. Asn-138 and Arg-169 together coordinate substrate. His-193 (proton acceptor) is an active-site residue. Residues Lys-224 and Lys-232 each carry the N6-acetyllysine modification. Position 239 is a phosphotyrosine (Tyr-239). Lys-243 carries the post-translational modification N6-acetyllysine. Thr-248 contacts substrate. Thr-309 carries the post-translational modification Phosphothreonine. Position 310 is a phosphoserine (Ser-310). Lys-318 carries the post-translational modification N6-acetyllysine; alternate. Lys-318 is modified (N6-succinyllysine; alternate). Thr-322 carries the phosphothreonine modification.

Belongs to the LDH/MDH superfamily. LDH family. Homotetramer. Interacts with PTEN upstream reading frame protein MP31. Interacts with folliculin FLCN; the interaction is direct and inhibits enzymatic activity. Post-translationally, ISGylated. In terms of tissue distribution, predominantly expressed in anaerobic tissues such as skeletal muscle and liver.

The protein localises to the cytoplasm. The enzyme catalyses (S)-lactate + NAD(+) = pyruvate + NADH + H(+). It functions in the pathway fermentation; pyruvate fermentation to lactate; (S)-lactate from pyruvate: step 1/1. Its activity is regulated as follows. Fermentation of pyruvate to lactate is inhibited when bound to folliculin FLCN, perhaps partly by FLCN preventing binding of cofactor NADH. Its function is as follows. Interconverts simultaneously and stereospecifically pyruvate and lactate with concomitant interconversion of NADH and NAD(+). This chain is L-lactate dehydrogenase A chain, found in Homo sapiens (Human).